The primary structure comprises 37 residues: Large ribosomal subunit protein bL36 (37 aa).

This sequence belongs to the bacterial ribosomal protein bL36 family.

The protein is Large ribosomal subunit protein bL36 of Synechococcus sp. (strain WH7803).